A 320-amino-acid chain; its full sequence is MQTRNAFSWIKKEITRSISVLLMIYIITRAPISNAYPIFAQQGYENPREATGRIVCANCHLANKPVDIEVPQAVLPDTVFEAVVRIPYDMQVKQVLANGKKGALNVGAVLILPEGFELAPPHRLSPQIKEKIGNLSFQSYRPTKKNILVIGPVPGKKYSEITFPILSPDPATKRDVYFLKYPLYVGGNRGRGQIYPDGSKSNNNVSNATATGVVKQIIRKEKGGYEITIVDASDGSEVIDIIPPGPELLVSEGESIKLDQPLTSNPNVGGFGQGDAEIVLQDPLRVQGLLLFLASIILAQILLVLKKKQFEKVQLSEMNF.

The signal sequence occupies residues 1–35; that stretch reads MQTRNAFSWIKKEITRSISVLLMIYIITRAPISNA. Residues Tyr-36, Cys-56, Cys-59, and His-60 each coordinate heme. Residues 286–305 form a helical membrane-spanning segment; it reads VQGLLLFLASIILAQILLVL.

This sequence belongs to the cytochrome f family. In terms of assembly, the 4 large subunits of the cytochrome b6-f complex are cytochrome b6, subunit IV (17 kDa polypeptide, petD), cytochrome f and the Rieske protein, while the 4 small subunits are PetG, PetL, PetM and PetN. The complex functions as a dimer. Heme serves as cofactor.

It is found in the plastid. The protein resides in the chloroplast thylakoid membrane. Functionally, component of the cytochrome b6-f complex, which mediates electron transfer between photosystem II (PSII) and photosystem I (PSI), cyclic electron flow around PSI, and state transitions. The chain is Cytochrome f (petA) from Pisum sativum (Garden pea).